A 1849-amino-acid chain; its full sequence is Protein TANC1 (1849 aa).

The residue at position 1 (methionine 1) is an N-acetylmethionine. Disordered stretches follow at residues 1–47 (MLKA…TTED) and 59–109 (MSLP…FREG). A compositionally biased stretch (basic and acidic residues) spans 8 to 21 (KSREGVKGSKKEAG). Positions 27-46 (ETPTLSSSGDSPVNSLSTTE) are enriched in polar residues. Residues serine 60, serine 63, serine 64, serine 204, serine 267, and serine 455 each carry the phosphoserine modification. Disordered stretches follow at residues 264–309 (DNCS…PRPN) and 430–481 (VASS…QRPR). The span at 451–468 (TPLLSPSSSTSALSAART) shows a compositional bias: low complexity. 11 ANK repeats span residues 886 to 918 (EGLSAALASLRNLYTPNVKVSRLLILGGANVNY), 924 to 953 (NNAPILCVQSHLGHEEVVTLLLEFGACLDG), 957 to 986 (NGMNALCYAAAAGHMKLVCLLTKKGARVDH), 990 to 1019 (KGQCALVHSALRGHSDILQYLLNCEWSAGP), 1030 to 1059 (ALQQALTAAASMGHSAVVQSLLGMAEEHEI), 1068 to 1097 (WGETALTAAAGRGKLEICELLLERGAAVSR), 1101 to 1130 (RGVPPLFCAARQGHWQVVQLLLDRGCDVNP), 1134 to 1163 (QGRTPLMVAACEGHLSTVEFLLSKGAALSS), 1167 to 1196 (EGLSALSWACLKGHRAVVQYLVEEGAEIDQ), 1200 to 1229 (NGRTPLDLAAFYGDAETVLYLVEKGAVIEH), and 1233 to 1262 (SGMRPLDRAIGCRNTAVVVTLLRKGAKLGN). TPR repeat units follow at residues 1279–1312 (LQKLMEEGNVMYKKGKMKEAAQRYQYALRKFPRE), 1326–1359 (VSLYLNLSRCRRKTNDFGLAEEFASKALELKPKS), and 1361–1393 (EAFYARARAKRNSRQFLAALADLQEAVKLCPTN). The segment covering 1410–1421 (LQRNQQQKQQAP) has biased composition (low complexity). 4 disordered regions span residues 1410–1503 (LQRN…ISKS), 1527–1605 (NQHL…GESG), 1635–1711 (QGGP…PRNT), and 1812–1849 (PHLYPEGVSKQPLHVSTEAHRSHLTSAKPKRSFIESNV). Phosphoserine occurs at positions 1429 and 1456. Residues 1447–1456 (EEAEEEDTSS) are compositionally biased toward acidic residues. Polar residues-rich tracts occupy residues 1527-1546 (NQHLGSGQSSMRNSNTKVQV) and 1593-1603 (PSQSLQLQRGE). A compositionally biased stretch (low complexity) spans 1649–1679 (SLSSSGSSGSPSSSVKMSSSTSSLTSSSSVS). Phosphoserine occurs at positions 1658, 1666, and 1667.

The protein belongs to the TANC family. In terms of assembly, interacts probably directly with DLG1, DLG4, HOMER1. Interacts with DLGAP1, INA, CAMK2A, GRIN2B and GRIA1. Interacts with TNIK and MINK1. Phosphorylated; by MINK1 and TNIK upon stimulation by RAP2A. As to expression, expressed in heart, lung, liver and kidney. Expressed in brain (at protein level).

It is found in the postsynaptic density. Its function is as follows. May be a scaffold component in the postsynaptic density. This Rattus norvegicus (Rat) protein is Protein TANC1 (Tanc1).